A 170-amino-acid polypeptide reads, in one-letter code: Phosphopantetheine adenylyltransferase (170 aa).

A substrate-binding site is contributed by Ser-14. ATP contacts are provided by residues 14–15 and His-22; that span reads SF. The substrate site is built by Lys-46, Leu-79, and Arg-93. ATP is bound by residues 94 to 96, Glu-104, and 129 to 135; these read GIR and IAEVSST.

The protein belongs to the bacterial CoaD family. Homohexamer. The cofactor is Mg(2+).

It localises to the cytoplasm. It carries out the reaction (R)-4'-phosphopantetheine + ATP + H(+) = 3'-dephospho-CoA + diphosphate. It participates in cofactor biosynthesis; coenzyme A biosynthesis; CoA from (R)-pantothenate: step 4/5. Its function is as follows. Reversibly transfers an adenylyl group from ATP to 4'-phosphopantetheine, yielding dephospho-CoA (dPCoA) and pyrophosphate. The protein is Phosphopantetheine adenylyltransferase of Neisseria meningitidis serogroup C (strain 053442).